Reading from the N-terminus, the 149-residue chain is Transcriptional repressor NrdR (149 aa).

Residues 3–34 (CPFCAAVDTKVIDSRLVSDGSQVRRRRQCLDC) fold into a zinc finger. Residues 49-139 (PRVIKSDDVR…VYRSFEDIRE (91 aa)) enclose the ATP-cone domain.

This sequence belongs to the NrdR family. Requires Zn(2+) as cofactor.

Its function is as follows. Negatively regulates transcription of bacterial ribonucleotide reductase nrd genes and operons by binding to NrdR-boxes. This is Transcriptional repressor NrdR from Yersinia enterocolitica serotype O:8 / biotype 1B (strain NCTC 13174 / 8081).